A 185-amino-acid polypeptide reads, in one-letter code: Kappa-casein (185 aa).

Residues 1 to 20 form the signal peptide; it reads MKSFFLVVNILALTLPFLGA. An O-linked (GalNAc...) threonine glycan is attached at Thr-143. Ser-161 carries the phosphoserine; alternate modification. Ser-161 carries an O-linked (GalNAc...) serine; alternate glycan. Thr-178 is a glycosylation site (O-linked (GalNAc...) threonine). Ser-179 is subject to Phosphoserine.

The protein belongs to the kappa-casein family. Mammary gland specific. Secreted in milk.

It localises to the secreted. Functionally, kappa-casein stabilizes micelle formation, preventing casein precipitation in milk. This is Kappa-casein (CSN3) from Equus caballus (Horse).